The chain runs to 774 residues: Two pore channel protein 2 (774 aa).

Over methionine 1–tyrosine 92 the chain is Cytoplasmic. A helical membrane pass occupies residues serine 93–isoleucine 113. Topologically, residues glutamate 114–glutamate 140 are extracellular. The helical transmembrane segment at glycine 141 to isoleucine 161 threads the bilayer. Residues glycine 162 to lysine 170 are Cytoplasmic-facing. Residues tryptophan 171 to serine 191 form a helical membrane-spanning segment. The Extracellular segment spans residues methionine 192–asparagine 197. Residues leucine 198–lysine 218 traverse the membrane as a helical segment. The segment at lysine 217–lysine 221 is interaction with phosphatidylinositol 3,5-bisphosphate. Over threonine 219 to serine 232 the chain is Cytoplasmic. A helical membrane pass occupies residues valine 233–alanine 253. The Extracellular segment spans residues lysine 254–tyrosine 267. Positions phenylalanine 268–isoleucine 292 form an intramembrane region, helical; Pore-forming. Topologically, residues proline 293–serine 302 are extracellular. A helical membrane pass occupies residues isoleucine 303 to isoleucine 323. Residues isoleucine 324–valine 452 are Cytoplasmic-facing. A helical membrane pass occupies residues leucine 453–lysine 475. Residues serine 476–glutamate 486 are Extracellular-facing. The chain crosses the membrane as a helical span at residues isoleucine 487 to phenylalanine 507. At glycine 508–asparagine 518 the chain is on the cytoplasmic side. Residues isoleucine 519–phenylalanine 539 traverse the membrane as a helical segment. Residues lysine 540 to asparagine 564 lie on the Extracellular side of the membrane. A helical membrane pass occupies residues methionine 565 to alanine 585. Topologically, residues serine 586–arginine 596 are cytoplasmic. Residues alanine 597–phenylalanine 617 form a helical membrane-spanning segment. The Extracellular portion of the chain corresponds to glutamine 618–asparagine 658. N-linked (GlcNAc...) asparagine glycosylation is found at asparagine 626, asparagine 632, and asparagine 637. The segment at residues phenylalanine 659–phenylalanine 681 is an intramembrane region (helical; Pore-forming). The Extracellular segment spans residues threonine 682–tyrosine 696. Residues phenylalanine 697–leucine 717 form a helical membrane-spanning segment. At glutamate 718 to tryptophan 774 the chain is on the cytoplasmic side.

Belongs to the calcium channel alpha-1 subunit (TC 1.A.1.11) family. Two pore calcium channel subfamily. In terms of assembly, homodimer. In terms of processing, N-glycosylated.

The protein localises to the late endosome membrane. It localises to the lysosome membrane. The catalysed reaction is Na(+)(in) = Na(+)(out). It catalyses the reaction Ca(2+)(in) = Ca(2+)(out). Functionally, intracellular channel initially characterized as a non-selective Ca(2+)-permeable channel activated by NAADP (nicotinic acid adenine dinucleotide phosphate), it is also a highly-selective Na(+) channel activated directly by PI(3,5)P2 (phosphatidylinositol 3,5-bisphosphate). Localizes to the lysosomal and late endosome membranes where it regulates organellar membrane excitability, membrane trafficking, and pH homeostasis. This Danio rerio (Zebrafish) protein is Two pore channel protein 2 (tpcn2).